A 491-amino-acid chain; its full sequence is Aspartyl/glutamyl-tRNA(Asn/Gln) amidotransferase subunit B (491 aa).

The protein belongs to the GatB/GatE family. GatB subfamily. In terms of assembly, heterotrimer of A, B and C subunits.

It carries out the reaction L-glutamyl-tRNA(Gln) + L-glutamine + ATP + H2O = L-glutaminyl-tRNA(Gln) + L-glutamate + ADP + phosphate + H(+). The enzyme catalyses L-aspartyl-tRNA(Asn) + L-glutamine + ATP + H2O = L-asparaginyl-tRNA(Asn) + L-glutamate + ADP + phosphate + 2 H(+). Its function is as follows. Allows the formation of correctly charged Asn-tRNA(Asn) or Gln-tRNA(Gln) through the transamidation of misacylated Asp-tRNA(Asn) or Glu-tRNA(Gln) in organisms which lack either or both of asparaginyl-tRNA or glutaminyl-tRNA synthetases. The reaction takes place in the presence of glutamine and ATP through an activated phospho-Asp-tRNA(Asn) or phospho-Glu-tRNA(Gln). This is Aspartyl/glutamyl-tRNA(Asn/Gln) amidotransferase subunit B from Nostoc punctiforme (strain ATCC 29133 / PCC 73102).